Here is a 409-residue protein sequence, read N- to C-terminus: Glutamyl-tRNA reductase (409 aa).

Residues 48-51 (TCNR), Ser89, 94-96 (ENE), and Gln100 contribute to the substrate site. Cys49 (nucleophile) is an active-site residue. 165–170 (GNGMLA) lines the NADP(+) pocket.

Belongs to the glutamyl-tRNA reductase family. Homodimer.

The catalysed reaction is (S)-4-amino-5-oxopentanoate + tRNA(Glu) + NADP(+) = L-glutamyl-tRNA(Glu) + NADPH + H(+). Its pathway is porphyrin-containing compound metabolism; protoporphyrin-IX biosynthesis; 5-aminolevulinate from L-glutamyl-tRNA(Glu): step 1/2. Catalyzes the NADPH-dependent reduction of glutamyl-tRNA(Glu) to glutamate 1-semialdehyde (GSA). In Thermoplasma volcanium (strain ATCC 51530 / DSM 4299 / JCM 9571 / NBRC 15438 / GSS1), this protein is Glutamyl-tRNA reductase.